Consider the following 587-residue polypeptide: DELLA protein GAIP-B (587 aa).

The tract at residues 1 to 23 is disordered; the sequence is MKREHHHLHPRPDPPSMAAAPNG. Residues 46–50 carry the DELLA motif motif; the sequence is DELLA. The GRAS domain occupies 209-577; sequence VDSQENGIQL…RPLIVTSAWK (369 aa). Positions 216–270 are leucine repeat I (LRI); the sequence is IQLVHALMACAEAVQQNNLNLAEALEKRIGYLAVSQAGAMRKVATFFAEALARRI. The tract at residues 288–353 is VHIID; it reads QLHFYESSPY…SGPPAFRLTG (66 aa). Residues 319-323 carry the VHIID motif; that stretch reads VHVID. The leucine repeat II (LRII) stretch occupies residues 367–399; it reads DVGWKLAKLVETINVEFEYRGFVANSLADLDAS. The tract at residues 411–498 is PFYRE; that stretch reads VVVNSVFELH…EMYLGKQICN (88 aa). An LXXLL motif motif is present at residues 419 to 423; it reads LHKLL. Positions 501–577 are SAW; it reads ACEGSDRVEW…RPLIVTSAWK (77 aa).

Belongs to the GRAS family. DELLA subfamily. Phosphorylated. In terms of processing, ubiquitinated. Upon GA application it is ubiquitinated, leading to its subsequent degradation.

The protein resides in the nucleus. Functionally, probable transcriptional regulator that acts as a repressor of the gibberellin (GA) signaling pathway. Probably acts by participating in large multiprotein complexes that represses transcription of GA-inducible genes. Upon GA application, it is degraded by the proteasome, allowing the GA signaling pathway. The sequence is that of DELLA protein GAIP-B (GAIPB) from Cucurbita maxima (Pumpkin).